A 99-amino-acid chain; its full sequence is Cell cycle protein GpsB (99 aa).

A coiled-coil region spans residues 34 to 71; sequence LDMIIKDYETFHQEIEELQQENLQLKKQLEEASKKQPV.

It belongs to the GpsB family. Forms polymers through the coiled coil domains. Interacts with PBP1, MreC and EzrA.

The protein localises to the cytoplasm. Its function is as follows. Divisome component that associates with the complex late in its assembly, after the Z-ring is formed, and is dependent on DivIC and PBP2B for its recruitment to the divisome. Together with EzrA, is a key component of the system that regulates PBP1 localization during cell cycle progression. Its main role could be the removal of PBP1 from the cell pole after pole maturation is completed. Also contributes to the recruitment of PBP1 to the division complex. Not essential for septum formation. The chain is Cell cycle protein GpsB from Bacillus velezensis (strain DSM 23117 / BGSC 10A6 / LMG 26770 / FZB42) (Bacillus amyloliquefaciens subsp. plantarum).